We begin with the raw amino-acid sequence, 444 residues long: tRNA modification GTPase MnmE (444 aa).

3 residues coordinate (6S)-5-formyl-5,6,7,8-tetrahydrofolate: R25, E83, and K122. Residues 218–370 (GFKVAIVGKP…IVGRLRDYLD (153 aa)) enclose the TrmE-type G domain. GTP-binding positions include 228–233 (NVGKSS), 247–253 (SDEAGTT), and 272–275 (DTAG). Mg(2+) is bound by residues S232 and T253. K444 lines the (6S)-5-formyl-5,6,7,8-tetrahydrofolate pocket.

The protein belongs to the TRAFAC class TrmE-Era-EngA-EngB-Septin-like GTPase superfamily. TrmE GTPase family. As to quaternary structure, homodimer. Heterotetramer of two MnmE and two MnmG subunits. The cofactor is K(+).

It localises to the cytoplasm. Its function is as follows. Exhibits a very high intrinsic GTPase hydrolysis rate. Involved in the addition of a carboxymethylaminomethyl (cmnm) group at the wobble position (U34) of certain tRNAs, forming tRNA-cmnm(5)s(2)U34. This chain is tRNA modification GTPase MnmE, found in Campylobacter curvus (strain 525.92).